Consider the following 432-residue polypeptide: Trigger factor (432 aa).

Positions 161–246 (GTRATINFVG…VVKVESRELP (86 aa)) constitute a PPIase FKBP-type domain.

This sequence belongs to the FKBP-type PPIase family. Tig subfamily.

Its subcellular location is the cytoplasm. It catalyses the reaction [protein]-peptidylproline (omega=180) = [protein]-peptidylproline (omega=0). Its function is as follows. Involved in protein export. Acts as a chaperone by maintaining the newly synthesized protein in an open conformation. Functions as a peptidyl-prolyl cis-trans isomerase. The protein is Trigger factor of Aliivibrio fischeri (strain ATCC 700601 / ES114) (Vibrio fischeri).